A 403-amino-acid polypeptide reads, in one-letter code: Phosphoglycerate kinase (403 aa).

Residues 21-23 (DFN), arginine 36, 59-62 (HLGR), arginine 119, and arginine 159 contribute to the substrate site. Residues lysine 214, glycine 301, glutamate 332, and 359-362 (GGDS) each bind ATP.

This sequence belongs to the phosphoglycerate kinase family. In terms of assembly, monomer.

It localises to the cytoplasm. It carries out the reaction (2R)-3-phosphoglycerate + ATP = (2R)-3-phospho-glyceroyl phosphate + ADP. Its pathway is carbohydrate degradation; glycolysis; pyruvate from D-glyceraldehyde 3-phosphate: step 2/5. The polypeptide is Phosphoglycerate kinase (Lactobacillus acidophilus (strain ATCC 700396 / NCK56 / N2 / NCFM)).